We begin with the raw amino-acid sequence, 1414 residues long: MHGKSLGSSRKNDSRSKIRQEKESNIDFDEKHDEYLINLQQRNRALNNSKAKDATQIKLQHLEEGFSLYLNGANADLRKQQSTQDLARESSKSSKIPDDGCSHLPGRRSQTAPGKIQRKAWVQNSIQIKSERGSRVYIGPNTKYSEDFESDDDMNEDQASDQYKYFTDSEKNVPQGPGKKRLVLDASDVKALRESLEISLCLQQDSKYSLDDDDADFVEEELIECETPELDSPSKTQLESKHQAFGHQRLLPGDFVVLEFNALDKKDGRMLTAKRKDNSEFYIPTKPVMVKNKTPRLKSSSFSSKDSFFPRPESRQEILLPTPRRSISENKDSRPSVSTVVDAINNENEAITRAISDGKTEKMTSGPSGISEGVVTKAIEKINLMKISQQKKLLKVLQDIDNDSSTNSNSEGEILKWDSVYLDPAVKDVICITVEILSNWGNQYYIGLTEIQFFDLKNEEIYVSPHDVDIRNVDVPGDPTCLVNGKTLTTKEHFMWTCPFHPPVQLYFIIRNATKSGDFDISKMKIWNYNKALSDLDIGAKLVKIYKDETLVFDGLLAKGSGNQDFDYSNTIDLHSGQIKSSSFISDQFSDETQISNSLGASNNIELKHQSDGLVYTSEQLSSILSEGSNQAKTSQQKDLHFENNTKGLRTFQDEALNKSFQHLALTSSSINCQEDITEGEVGIKMSYNKEEHFKINQSKDFNTMTAELQMVSATSSKEPPPCPRDDNDLTVTDQLERTPGRKECSSLNRFPPWLSSSSNFQQKSHNQPTKNHLNASSSTFTNKRSDQDINQFLDEYVKSSNTYSNKNFKNCSQSKMLCSSSKMDNEDDLENFSNQSSYNSDRPVSGRRKTVQMQDKSEKYEGASFHKTINPVDTKNLRPRWQNDQENNLLESWTSLIKFNKSHRGRISNLEFEGDIFDEFLQQQQKAGKQSDSTKNGSSLMPKGATEIHLESEKEEGSNFEIPVLPYGQHLCIKIVTTWGDRHYVGLNGIEVFASTGKPVEISRIRADPPDINILPAYGKDPRVVVNLIDGVNRTQDDMHLWLAPFSPGKLHFINLDFVEPCRVAMIRIWNYNKSRIHSFRGVKEVEIFLDNELIFKGEIAKASGTLSGAAEQFGDTILFTTDDEILQAMSLFDETFSEELKATETPTEHEIDSLRPSTADSIKEERPFTQAGLSEKLQSNLTDVSENYSDKLPGIYSGKCLLLNFTMTWGDPHYLGLTGMEIVGRDGKALAITLDALSACPQDLSILPEYKDDLRTLDKLIDGVNITNEDTHMWLIPFASGADHTITINFNKSEDIAGIRFWNYNKSPEDTYRGAKIVYVTLDGHAISPPGGFLIRKGPGNCHFDFAQEILFVDYIHEQQILEKQLRSHSKCMELATMDYEAPLMPCGFIFQLQLITSWGDPYYIGLNGLEM.

Disordered stretches follow at residues 1-32 (MHGK…DEKH), 80-116 (QQST…PGKI), 139-158 (GPNT…NEDQ), 712-731 (VSAT…NDLT), 756-783 (SSSS…TFTN), 823-861 (KMDN…SEKY), and 924-943 (QQQK…SLMP). Basic and acidic residues-rich tracts occupy residues 10–32 (RKND…DEKH) and 86–101 (LARE…DDGC). Over residues 147–158 (DFESDDDMNEDQ) the composition is skewed to acidic residues. Polar residues-rich tracts occupy residues 832 to 843 (NFSNQSSYNSDR) and 924 to 940 (QQQK…NGSS).

Its subcellular location is the cytoplasm. It localises to the cytoskeleton. It is found in the cilium axoneme. The protein resides in the cilium basal body. May control cilium integrity. The protein is Protein KATNIP homolog of Xenopus laevis (African clawed frog).